Consider the following 776-residue polypeptide: Protein translocase subunit SecA 2 (776 aa).

Residues Q80, 98 to 102 (GEGKT), and D486 contribute to the ATP site.

It belongs to the SecA family. As to quaternary structure, monomer and homodimer. Part of the essential Sec protein translocation apparatus which comprises SecA, SecYEG and auxiliary proteins SecDF. Other proteins may also be involved.

Its subcellular location is the cell membrane. The protein localises to the cytoplasm. The enzyme catalyses ATP + H2O + cellular proteinSide 1 = ADP + phosphate + cellular proteinSide 2.. In terms of biological role, part of the Sec protein translocase complex. Interacts with the SecYEG preprotein conducting channel. Has a central role in coupling the hydrolysis of ATP to the transfer of proteins into and across the cell membrane, serving as an ATP-driven molecular motor driving the stepwise translocation of polypeptide chains across the membrane. This chain is Protein translocase subunit SecA 2, found in Listeria monocytogenes serotype 1/2a (strain 10403S).